Reading from the N-terminus, the 261-residue chain is MSIEMLRKSNPLIHCMTNVVVTNFTANGLLAVGASPVMAYAKEEVADMAKVANALLLNIGTLSAESIDNMIIAGKAANKAGAPVVLDPVGAGATVFRTESCKRILKEVDVTIVRGNGGEIAALSDQAGTVKGVDGSIDSDPVELAKHAANVLNSAVVVTGEVDVVTDGTGTVCGYNGHPWLTKVVGTGCLSGAIVAAFASLKTDDFLEVIGYGLVAYGVAAEKAYEETKAKGYGSFQTAFLNQLGRLTDEDVKQHGRFERS.

Met-38 provides a ligand contact to substrate. The ATP site is built by Arg-114 and Thr-159. Gly-186 contributes to the substrate binding site.

The protein belongs to the Thz kinase family. Mg(2+) serves as cofactor.

The enzyme catalyses 5-(2-hydroxyethyl)-4-methylthiazole + ATP = 4-methyl-5-(2-phosphooxyethyl)-thiazole + ADP + H(+). It functions in the pathway cofactor biosynthesis; thiamine diphosphate biosynthesis; 4-methyl-5-(2-phosphoethyl)-thiazole from 5-(2-hydroxyethyl)-4-methylthiazole: step 1/1. In terms of biological role, catalyzes the phosphorylation of the hydroxyl group of 4-methyl-5-beta-hydroxyethylthiazole (THZ). This Halalkalibacterium halodurans (strain ATCC BAA-125 / DSM 18197 / FERM 7344 / JCM 9153 / C-125) (Bacillus halodurans) protein is Hydroxyethylthiazole kinase.